A 600-amino-acid chain; its full sequence is Arginine--tRNA ligase (600 aa).

Positions 132–142 (ANPTGPLHVGH) match the 'HIGH' region motif.

The protein belongs to the class-I aminoacyl-tRNA synthetase family. Monomer.

It is found in the cytoplasm. The catalysed reaction is tRNA(Arg) + L-arginine + ATP = L-arginyl-tRNA(Arg) + AMP + diphosphate. In Ralstonia nicotianae (strain ATCC BAA-1114 / GMI1000) (Ralstonia solanacearum), this protein is Arginine--tRNA ligase.